Consider the following 625-residue polypeptide: 1,4-alpha-glucan branching enzyme GlgB (625 aa).

D302 functions as the Nucleophile in the catalytic mechanism. Residue E355 is the Proton donor of the active site.

Belongs to the glycosyl hydrolase 13 family. GlgB subfamily. Monomer.

It catalyses the reaction Transfers a segment of a (1-&gt;4)-alpha-D-glucan chain to a primary hydroxy group in a similar glucan chain.. The protein operates within glycan biosynthesis; glycogen biosynthesis. In terms of biological role, catalyzes the formation of the alpha-1,6-glucosidic linkages in glycogen by scission of a 1,4-alpha-linked oligosaccharide from growing alpha-1,4-glucan chains and the subsequent attachment of the oligosaccharide to the alpha-1,6 position. The sequence is that of 1,4-alpha-glucan branching enzyme GlgB from Albidiferax ferrireducens (strain ATCC BAA-621 / DSM 15236 / T118) (Rhodoferax ferrireducens).